The following is a 381-amino-acid chain: Chaperone protein DnaJ (381 aa).

The 69-residue stretch at 5–73 folds into the J domain; the sequence is DYYEVLGVGK…EKKAAYDQYG (69 aa). The segment at 141–219 adopts a CR-type zinc-finger fold; the sequence is GHEAQIRVPH…CHGQGKLKSQ (79 aa). Zn(2+) contacts are provided by C154, C157, C171, C174, C193, C196, C207, and C210. 4 CXXCXGXG motif repeats span residues 154 to 161, 171 to 178, 193 to 200, and 207 to 214; these read CDHCHGNG, CPTCHGAG, CPKCHGSG, and CTKCHGQG. The tract at residues 357 to 381 is disordered; sequence SVHEGGSRHSPQEQSWLDKVKSFFS.

This sequence belongs to the DnaJ family. In terms of assembly, homodimer. Zn(2+) serves as cofactor.

The protein resides in the cytoplasm. Participates actively in the response to hyperosmotic and heat shock by preventing the aggregation of stress-denatured proteins and by disaggregating proteins, also in an autonomous, DnaK-independent fashion. Unfolded proteins bind initially to DnaJ; upon interaction with the DnaJ-bound protein, DnaK hydrolyzes its bound ATP, resulting in the formation of a stable complex. GrpE releases ADP from DnaK; ATP binding to DnaK triggers the release of the substrate protein, thus completing the reaction cycle. Several rounds of ATP-dependent interactions between DnaJ, DnaK and GrpE are required for fully efficient folding. Also involved, together with DnaK and GrpE, in the DNA replication of plasmids through activation of initiation proteins. This Cupriavidus necator (strain ATCC 17699 / DSM 428 / KCTC 22496 / NCIMB 10442 / H16 / Stanier 337) (Ralstonia eutropha) protein is Chaperone protein DnaJ.